The primary structure comprises 370 residues: Cobalt-precorrin-5B C(1)-methyltransferase (370 aa).

The protein belongs to the CbiD family.

It carries out the reaction Co-precorrin-5B + S-adenosyl-L-methionine = Co-precorrin-6A + S-adenosyl-L-homocysteine. The protein operates within cofactor biosynthesis; adenosylcobalamin biosynthesis; cob(II)yrinate a,c-diamide from sirohydrochlorin (anaerobic route): step 6/10. In terms of biological role, catalyzes the methylation of C-1 in cobalt-precorrin-5B to form cobalt-precorrin-6A. This chain is Cobalt-precorrin-5B C(1)-methyltransferase, found in Pseudomonas syringae pv. syringae (strain B728a).